The primary structure comprises 520 residues: Cytochrome b5 reductase 4 (520 aa).

At methionine 1 the chain carries N-acetylmethionine. Residues 1-16 (MLNVPSQSFPGPSSQQ) show a composition bias toward low complexity. Residues 1–27 (MLNVPSQSFPGPSSQQRVASGGRSKVP) are disordered. In terms of domain architecture, Cytochrome b5 heme-binding spans 54 to 130 (LIEVTEEELK…LKECLVGRMA (77 aa)). Residues histidine 89 and histidine 112 each contribute to the heme site. The region spanning 164–255 (PSSPSYDWFQ…KENTSWKCLG (92 aa)) is the CS domain. Residues 272-384 (LFYRKCQLVS…SNPEGNFIIS (113 aa)) form the FAD-binding FR-type domain. FAD is bound by residues 364–379 (DQLQ…NPEG) and 391–423 (DLFL…KVKL).

It belongs to the flavoprotein pyridine nucleotide cytochrome reductase family. FAD serves as cofactor.

It is found in the endoplasmic reticulum. The enzyme catalyses 2 Fe(III)-[cytochrome b5] + NADH = 2 Fe(II)-[cytochrome b5] + NAD(+) + H(+). NADH-cytochrome b5 reductase involved in endoplasmic reticulum stress response pathway. Plays a critical role in protecting pancreatic beta-cells against oxidant stress, possibly by protecting the cell from excess buildup of reactive oxygen species (ROS). This Bos taurus (Bovine) protein is Cytochrome b5 reductase 4 (CYB5R4).